The chain runs to 180 residues: NAD(P)H-quinone oxidoreductase subunit I, chloroplastic (180 aa).

4Fe-4S ferredoxin-type domains follow at residues 55 to 84 (GRIH…VDWR) and 95 to 124 (LNYS…MTEE). [4Fe-4S] cluster is bound by residues Cys64, Cys67, Cys70, Cys74, Cys104, Cys107, Cys110, and Cys114.

The protein belongs to the complex I 23 kDa subunit family. NDH is composed of at least 16 different subunits, 5 of which are encoded in the nucleus. Requires [4Fe-4S] cluster as cofactor.

It is found in the plastid. The protein resides in the chloroplast thylakoid membrane. It carries out the reaction a plastoquinone + NADH + (n+1) H(+)(in) = a plastoquinol + NAD(+) + n H(+)(out). The catalysed reaction is a plastoquinone + NADPH + (n+1) H(+)(in) = a plastoquinol + NADP(+) + n H(+)(out). Functionally, NDH shuttles electrons from NAD(P)H:plastoquinone, via FMN and iron-sulfur (Fe-S) centers, to quinones in the photosynthetic chain and possibly in a chloroplast respiratory chain. The immediate electron acceptor for the enzyme in this species is believed to be plastoquinone. Couples the redox reaction to proton translocation, and thus conserves the redox energy in a proton gradient. The sequence is that of NAD(P)H-quinone oxidoreductase subunit I, chloroplastic from Hordeum vulgare (Barley).